Reading from the N-terminus, the 876-residue chain is Alanine--tRNA ligase (876 aa).

Zn(2+) contacts are provided by histidine 562, histidine 566, cysteine 666, and histidine 670.

It belongs to the class-II aminoacyl-tRNA synthetase family. It depends on Zn(2+) as a cofactor.

It localises to the cytoplasm. It catalyses the reaction tRNA(Ala) + L-alanine + ATP = L-alanyl-tRNA(Ala) + AMP + diphosphate. Functionally, catalyzes the attachment of alanine to tRNA(Ala) in a two-step reaction: alanine is first activated by ATP to form Ala-AMP and then transferred to the acceptor end of tRNA(Ala). Also edits incorrectly charged Ser-tRNA(Ala) and Gly-tRNA(Ala) via its editing domain. This Hahella chejuensis (strain KCTC 2396) protein is Alanine--tRNA ligase.